Here is a 273-residue protein sequence, read N- to C-terminus: tRNA pseudouridine synthase B (273 aa).

The Nucleophile role is filled by Asp-38.

Belongs to the pseudouridine synthase TruB family. Type 1 subfamily.

The catalysed reaction is uridine(55) in tRNA = pseudouridine(55) in tRNA. Functionally, responsible for synthesis of pseudouridine from uracil-55 in the psi GC loop of transfer RNAs. In Sulfurimonas denitrificans (strain ATCC 33889 / DSM 1251) (Thiomicrospira denitrificans (strain ATCC 33889 / DSM 1251)), this protein is tRNA pseudouridine synthase B.